A 176-amino-acid chain; its full sequence is 2-C-methyl-D-erythritol 2,4-cyclodiphosphate synthase (176 aa).

Positions 23, 25, and 60 each coordinate a divalent metal cation. 23–25 contacts 4-CDP-2-C-methyl-D-erythritol 2-phosphate; it reads DSH. 149–152 contacts 4-CDP-2-C-methyl-D-erythritol 2-phosphate; that stretch reads TSGE.

Belongs to the IspF family. As to quaternary structure, homotrimer. A divalent metal cation is required as a cofactor.

The enzyme catalyses 4-CDP-2-C-methyl-D-erythritol 2-phosphate = 2-C-methyl-D-erythritol 2,4-cyclic diphosphate + CMP. It participates in isoprenoid biosynthesis; isopentenyl diphosphate biosynthesis via DXP pathway; isopentenyl diphosphate from 1-deoxy-D-xylulose 5-phosphate: step 4/6. Involved in the biosynthesis of isopentenyl diphosphate (IPP) and dimethylallyl diphosphate (DMAPP), two major building blocks of isoprenoid compounds. Catalyzes the conversion of 4-diphosphocytidyl-2-C-methyl-D-erythritol 2-phosphate (CDP-ME2P) to 2-C-methyl-D-erythritol 2,4-cyclodiphosphate (ME-CPP) with a corresponding release of cytidine 5-monophosphate (CMP). This chain is 2-C-methyl-D-erythritol 2,4-cyclodiphosphate synthase, found in Chlamydia abortus (strain DSM 27085 / S26/3) (Chlamydophila abortus).